Consider the following 153-residue polypeptide: SsrA-binding protein (153 aa).

The protein belongs to the SmpB family.

It localises to the cytoplasm. In terms of biological role, required for rescue of stalled ribosomes mediated by trans-translation. Binds to transfer-messenger RNA (tmRNA), required for stable association of tmRNA with ribosomes. tmRNA and SmpB together mimic tRNA shape, replacing the anticodon stem-loop with SmpB. tmRNA is encoded by the ssrA gene; the 2 termini fold to resemble tRNA(Ala) and it encodes a 'tag peptide', a short internal open reading frame. During trans-translation Ala-aminoacylated tmRNA acts like a tRNA, entering the A-site of stalled ribosomes, displacing the stalled mRNA. The ribosome then switches to translate the ORF on the tmRNA; the nascent peptide is terminated with the 'tag peptide' encoded by the tmRNA and targeted for degradation. The ribosome is freed to recommence translation, which seems to be the essential function of trans-translation. This chain is SsrA-binding protein, found in Orientia tsutsugamushi (strain Boryong) (Rickettsia tsutsugamushi).